The primary structure comprises 699 residues: NAD(P)H-quinone oxidoreductase subunit 5, chloroplastic (699 aa).

The next 15 helical transmembrane spans lie at 1–21 (WIIP…LLLF), 32–52 (WAFP…NLSI), 81–101 (IDPL…TVLI), 117–137 (FAYM…SNLI), 139–159 (IYIF…FWFT), 177–197 (GDFG…SFEF), 216–236 (LFVT…SAQF), 250–270 (TPIS…FLVA), 272–292 (LLPL…IGII), 319–339 (LGYM…FHLI), 346–366 (ALLF…VGYS), 388–408 (ISFL…CFWS), 417–437 (WLYS…TAFY), 539–559 (LFPL…GISF), and 598–618 (IFSV…YKPI).

This sequence belongs to the complex I subunit 5 family. In terms of assembly, NDH is composed of at least 16 different subunits, 5 of which are encoded in the nucleus.

The protein resides in the plastid. It localises to the chloroplast thylakoid membrane. It carries out the reaction a plastoquinone + NADH + (n+1) H(+)(in) = a plastoquinol + NAD(+) + n H(+)(out). The enzyme catalyses a plastoquinone + NADPH + (n+1) H(+)(in) = a plastoquinol + NADP(+) + n H(+)(out). Functionally, NDH shuttles electrons from NAD(P)H:plastoquinone, via FMN and iron-sulfur (Fe-S) centers, to quinones in the photosynthetic chain and possibly in a chloroplast respiratory chain. The immediate electron acceptor for the enzyme in this species is believed to be plastoquinone. Couples the redox reaction to proton translocation, and thus conserves the redox energy in a proton gradient. This Digitalis grandiflora (Yellow foxglove) protein is NAD(P)H-quinone oxidoreductase subunit 5, chloroplastic (ndhF).